The following is a 234-amino-acid chain: Glucosamine-6-phosphate deaminase (234 aa).

Asp-62 serves as the catalytic Proton acceptor; for enolization step. The active-site For ring-opening step is the Asn-128. His-130 acts as the Proton acceptor; for ring-opening step in catalysis. The active-site For ring-opening step is Glu-135.

This sequence belongs to the glucosamine/galactosamine-6-phosphate isomerase family. NagB subfamily.

The enzyme catalyses alpha-D-glucosamine 6-phosphate + H2O = beta-D-fructose 6-phosphate + NH4(+). It functions in the pathway amino-sugar metabolism; N-acetylneuraminate degradation; D-fructose 6-phosphate from N-acetylneuraminate: step 5/5. Catalyzes the reversible isomerization-deamination of glucosamine 6-phosphate (GlcN6P) to form fructose 6-phosphate (Fru6P) and ammonium ion. The chain is Glucosamine-6-phosphate deaminase from Streptococcus uberis (strain ATCC BAA-854 / 0140J).